The primary structure comprises 380 residues: Crotonobetainyl-CoA reductase (380 aa).

Belongs to the acyl-CoA dehydrogenase family. Homotetramer. The cofactor is FAD.

Its subcellular location is the cytoplasm. It catalyses the reaction 4-(trimethylamino)butanoyl-CoA + oxidized [electron-transfer flavoprotein] + H(+) = crotonobetainyl-CoA + reduced [electron-transfer flavoprotein]. The protein operates within amine and polyamine metabolism; carnitine metabolism. In terms of biological role, catalyzes the reduction of crotonobetainyl-CoA to gamma-butyrobetainyl-CoA. The chain is Crotonobetainyl-CoA reductase from Shigella flexneri serotype 5b (strain 8401).